Consider the following 293-residue polypeptide: Undecaprenyl-diphosphatase (293 aa).

The next 5 helical transmembrane spans lie at 107–127, 134–154, 207–227, 243–263, and 268–288; these read WMII…KDLI, MWIT…AEKV, FSFL…LPDA, IGTL…MKFV, and FSWF…LLWL.

It belongs to the UppP family.

The protein localises to the cell membrane. It carries out the reaction di-trans,octa-cis-undecaprenyl diphosphate + H2O = di-trans,octa-cis-undecaprenyl phosphate + phosphate + H(+). Catalyzes the dephosphorylation of undecaprenyl diphosphate (UPP). Confers resistance to bacitracin. The protein is Undecaprenyl-diphosphatase of Corynebacterium efficiens (strain DSM 44549 / YS-314 / AJ 12310 / JCM 11189 / NBRC 100395).